Consider the following 359-residue polypeptide: Histidinol-phosphate aminotransferase (359 aa).

Lys217 bears the N6-(pyridoxal phosphate)lysine mark.

It belongs to the class-II pyridoxal-phosphate-dependent aminotransferase family. Histidinol-phosphate aminotransferase subfamily. As to quaternary structure, homodimer. Requires pyridoxal 5'-phosphate as cofactor.

It carries out the reaction L-histidinol phosphate + 2-oxoglutarate = 3-(imidazol-4-yl)-2-oxopropyl phosphate + L-glutamate. It functions in the pathway amino-acid biosynthesis; L-histidine biosynthesis; L-histidine from 5-phospho-alpha-D-ribose 1-diphosphate: step 7/9. In Salmonella typhi, this protein is Histidinol-phosphate aminotransferase.